Consider the following 756-residue polypeptide: Inhibitor of nuclear factor kappa-B kinase subunit beta (756 aa).

Residues 15–300 enclose the Protein kinase domain; the sequence is WEMKERLGTG…DPVYGPNGCF (286 aa). Residues 21–29 and Lys44 contribute to the ATP site; that span reads LGTGGFGNV. Catalysis depends on Asp145, which acts as the Proton acceptor. Lys163 participates in a covalent cross-link: Glycyl lysine isopeptide (Lys-Gly) (interchain with G-Cter in ubiquitin). A Phosphoserine; by TBK1 and PKC/PRKCZ modification is found at Ser177. S-nitrosocysteine is present on Cys179. Position 181 is a phosphoserine; by TBK1, PKC/PRKCZ and PDPK1 (Ser181). Pro191 is subject to Hydroxyproline. The leucine-zipper stretch occupies residues 458-479; it reads LLRNNSCLSKMKNSMASMSQQL. A phosphoserine; by autocatalysis mark is found at Ser670, Ser672, Ser675, Ser682, Ser689, Ser697, Ser705, Ser733, and Ser740. The segment at 737 to 742 is NEMO-binding; sequence LDWSWL.

This sequence belongs to the protein kinase superfamily. Ser/Thr protein kinase family. I-kappa-B kinase subfamily. In terms of assembly, component of the I-kappa-B-kinase (IKK) core complex consisting of CHUK, IKBKB and IKBKG; probably four alpha/CHUK-beta/IKBKB dimers are associated with four gamma/IKBKG subunits. The IKK core complex seems to associate with regulatory or adapter proteins to form a IKK-signalosome holo-complex. The IKK complex associates with TERF2IP/RAP1, leading to promote IKK-mediated phosphorylation of RELA/p65. Part of a complex composed of NCOA2, NCOA3, CHUK/IKKA, IKBKB, IKBKG and CREBBP. Part of a 70-90 kDa complex at least consisting of CHUK/IKKA, IKBKB, NFKBIA, RELA, ELP1 and MAP3K14. Found in a membrane raft complex, at least composed of BCL10, CARD11, DPP4 and IKBKB. Interacts with SQSTM1 through PRKCZ or PRKCI. Forms an NGF-induced complex with IKBKB, PRKCI and TRAF6. May interact with MAVS/IPS1. Interacts with NALP2. Interacts with TICAM1. Interacts with FAF1; the interaction disrupts the IKK complex formation. Interacts with ATM. Part of a ternary complex consisting of TANK, IKBKB and IKBKG. Interacts with NIBP; the interaction is direct. Interacts with ARRB1 and ARRB2. Interacts with TRIM21. Interacts with NLRC5; prevents IKBKB phosphorylation and kinase activity. Interacts with PDPK1. Interacts with EIF2AK2/PKR. The phosphorylated form interacts with PPM1A and PPM1B. Interacts with ZNF268; the interaction is further increased in a TNF-alpha-dependent manner. Interacts with IKBKE. Interacts with ZC3H12A. Interacts with AKAP13. Interacts with IFIT5; the interaction synergizes the recruitment of IKK to MAP3K7 and enhances IKK phosphorylation. Interacts with LRRC14; disrupts IKBKB-IKBKG interaction preventing I-kappa-B-kinase (IKK) core complex formation and leading to a decrease of IKBKB phosphorylation and NF-kappaB activation. Interacts with SASH1. Interacts with ARFIP2. Interacts with FKBP5. Upon cytokine stimulation, phosphorylated on Ser-177 and Ser-181 by MEKK1 and/or MAP3K14/NIK as well as TBK1 and PRKCZ; which enhances activity. Phosphorylated by MAP3K7/TAK1 in response to NOD1 and NOD2 signaling, promoting activation and phosphorylation of NF-kappa-B inhibitors, leading to NF-kappa-B activation. Once activated, autophosphorylates on the C-terminal serine cluster; which decreases activity and prevents prolonged activation of the inflammatory response. Phosphorylated by the IKK-related kinases TBK1 and IKBKE, which is associated with reduced CHUK/IKKA and IKBKB activity and NF-kappa-B-dependent gene transcription. Dephosphorylated at Ser-177 and Ser-181 by PPM1A and PPM1B. Post-translationally, ubiquitinated. Monoubiquitination involves TRIM21 that leads to inhibition of Tax-induced NF-kappa-B signaling. 'Ser-163' may not serve as a monoubiquitination site. Ubiquitination on 'Ser-163' may modulate phosphorylation on C-terminal serine residues. In terms of processing, hydroxylated by PHD1/EGLN2, loss of hydroxylation under hypoxic conditions results in activation of NF-kappa-B.

Its subcellular location is the cytoplasm. It localises to the nucleus. The protein resides in the membrane raft. The catalysed reaction is L-seryl-[I-kappa-B protein] + ATP = O-phospho-L-seryl-[I-kappa-B protein] + ADP + H(+). It carries out the reaction L-seryl-[protein] + ATP = O-phospho-L-seryl-[protein] + ADP + H(+). The enzyme catalyses L-threonyl-[protein] + ATP = O-phospho-L-threonyl-[protein] + ADP + H(+). In terms of biological role, serine kinase that plays an essential role in the NF-kappa-B signaling pathway which is activated by multiple stimuli such as inflammatory cytokines, bacterial or viral products, DNA damages or other cellular stresses. Acts as a part of the canonical IKK complex in the conventional pathway of NF-kappa-B activation. Phosphorylates inhibitors of NF-kappa-B on 2 critical serine residues. These modifications allow polyubiquitination of the inhibitors and subsequent degradation by the proteasome. In turn, free NF-kappa-B is translocated into the nucleus and activates the transcription of hundreds of genes involved in immune response, growth control, or protection against apoptosis. In addition to the NF-kappa-B inhibitors, phosphorylates several other components of the signaling pathway including NEMO/IKBKG, NF-kappa-B subunits RELA and NFKB1, as well as IKK-related kinases TBK1 and IKBKE. IKK-related kinase phosphorylations may prevent the overproduction of inflammatory mediators since they exert a negative regulation on canonical IKKs. Phosphorylates FOXO3, mediating the TNF-dependent inactivation of this pro-apoptotic transcription factor. Also phosphorylates other substrates including NAA10, NCOA3, BCL10 and IRS1. Phosphorylates RIPK1 at 'Ser-25' which represses its kinase activity and consequently prevents TNF-mediated RIPK1-dependent cell death. Phosphorylates the C-terminus of IRF5, stimulating IRF5 homodimerization and translocation into the nucleus. The protein is Inhibitor of nuclear factor kappa-B kinase subunit beta (IKBKB) of Bos taurus (Bovine).